The chain runs to 1298 residues: Phosphoribosylformylglycinamidine synthase (1298 aa).

The segment at 303-327 (FPGAATGSGGEIRDEGATGRGAKPK) is disordered. ATP is bound by residues 305-316 (GAATGSGGEIRD), 384-386 (TGY), and alanine 676. 4 residues coordinate Mg(2+): aspartate 677, glutamate 716, asparagine 720, and aspartate 884. Residue serine 886 participates in ATP binding. The Glutamine amidotransferase type-1 domain maps to 1045–1298 (VAVLREQGVN…MFRNARAWVN (254 aa)). Cysteine 1138 functions as the Nucleophile in the catalytic mechanism. Active-site residues include histidine 1263 and glutamate 1265.

In the N-terminal section; belongs to the FGAMS family. As to quaternary structure, monomer.

It is found in the cytoplasm. The enzyme catalyses N(2)-formyl-N(1)-(5-phospho-beta-D-ribosyl)glycinamide + L-glutamine + ATP + H2O = 2-formamido-N(1)-(5-O-phospho-beta-D-ribosyl)acetamidine + L-glutamate + ADP + phosphate + H(+). Its pathway is purine metabolism; IMP biosynthesis via de novo pathway; 5-amino-1-(5-phospho-D-ribosyl)imidazole from N(2)-formyl-N(1)-(5-phospho-D-ribosyl)glycinamide: step 1/2. Functionally, phosphoribosylformylglycinamidine synthase involved in the purines biosynthetic pathway. Catalyzes the ATP-dependent conversion of formylglycinamide ribonucleotide (FGAR) and glutamine to yield formylglycinamidine ribonucleotide (FGAM) and glutamate. In Pseudomonas syringae pv. syringae (strain B728a), this protein is Phosphoribosylformylglycinamidine synthase.